The primary structure comprises 105 residues: uncharacterized protein (105 aa).

It belongs to the baculoviridae 11 kDa protein family.

This is an uncharacterized protein from Autographa californica nuclear polyhedrosis virus (AcMNPV).